Here is a 468-residue protein sequence, read N- to C-terminus: Adenosylhomocysteinase (468 aa).

Residues Thr-57, Asp-132, and Glu-194 each coordinate substrate. 195-197 (TTT) is an NAD(+) binding site. Lys-224 and Asp-228 together coordinate substrate. Residues Asn-229, 258–263 (GFGDVG), Glu-281, Asn-316, 337–339 (IGH), and Asn-382 contribute to the NAD(+) site.

It belongs to the adenosylhomocysteinase family. NAD(+) is required as a cofactor.

The protein localises to the cytoplasm. The catalysed reaction is S-adenosyl-L-homocysteine + H2O = L-homocysteine + adenosine. The protein operates within amino-acid biosynthesis; L-homocysteine biosynthesis; L-homocysteine from S-adenosyl-L-homocysteine: step 1/1. Its function is as follows. May play a key role in the regulation of the intracellular concentration of adenosylhomocysteine. The sequence is that of Adenosylhomocysteinase from Methylobacterium sp. (strain 4-46).